The chain runs to 397 residues: Subtilisin-like serine protease Pen c 1 (397 aa).

The first 19 residues, 1–19, serve as a signal peptide directing secretion; that stretch reads MGFLKVLATSLATLAVVDA. Positions 20–115 are cleaved as a propeptide — removed in mature form; sequence GTLLTASNTD…IEPDMIVNAT (96 aa). The region spanning 35 to 113 is the Inhibitor I9 domain; sequence SYIVVMNDDV…KYIEPDMIVN (79 aa). The 273-residue stretch at 125 to 397 folds into the Peptidase S8 domain; that stretch reads SWGLARISSK…SKLLYNGINV (273 aa). Catalysis depends on charge relay system residues D157, H188, and S343.

Belongs to the peptidase S8 family.

Its subcellular location is the secreted. Inhibited by 0.1 mM diisopropyl fluorophosphate (DFP), phenylmethanesulfonyl fluoride (PMSF), chymostatin and elastatinal. Not inhibited by N-alpha-p-tosyl-L-lysine chloromethylketone (TLCK), N-tosyl-L-phenylalanyl chloromethyl ketone (TPCK) or N-carbobenzoxy-L-phenylalanine chloromethylketone (ZPCK). In terms of biological role, serine protease. Hydrolyzes azocasein. Cleaves peptide bonds of the oxidized insulin B chain preferably at 15-Leu-|-Tyr-16, but also at 4-Gln-|-His-5 and 24-Phe-|-Phe-25, and to a lesser extent at 5-His-|-Leu-6 and 25-Phe-|-Tyr-26. Hydrolyzes amide bonds between amino acids and 7-amino-4-methylcoumarin (AMC) in vitro. The protein is Subtilisin-like serine protease Pen c 1 of Penicillium citrinum.